The primary structure comprises 300 residues: Mitochondrial GTP/GDP carrier protein 1 (300 aa).

Solcar repeat units lie at residues 8–108 (QSGL…KKDF), 117–198 (GKAM…AKEY), and 208–293 (ATWS…LIPR). A run of 6 helical transmembrane segments spans residues 14–34 (LLGS…VDTI), 85–101 (QRVY…EFLN), 122–142 (SAAA…LDVL), 173–189 (GWGW…FALF), 214–234 (FISS…LDVI), and 268–285 (GLTP…FSFA).

Belongs to the mitochondrial carrier (TC 2.A.29) family.

The protein localises to the mitochondrion inner membrane. Its function is as follows. Mitochondrial GTP/GDP transporter required for GTP uptake and GDP exit from mitochondria. Involved in mitochondrial iron transport and essential for mitochondrial genome maintenance. The polypeptide is Mitochondrial GTP/GDP carrier protein 1 (GGC1) (Saccharomyces cerevisiae (strain ATCC 204508 / S288c) (Baker's yeast)).